A 1359-amino-acid polypeptide reads, in one-letter code: Transcriptional regulator ATRX homolog (1359 aa).

The segment at 1–402 (MRVGVSESED…RAEKERRKRL (402 aa)) is disordered. The span at 11 to 49 (SDGHVIEDEDLEMARQIENERKEKRAQKLKEKREREGKP) shows a compositional bias: basic and acidic residues. Basic residues predominate over residues 50-61 (PPKKRPAKKRKA). Acidic residues predominate over residues 64–73 (SEEDDDDEEE). Basic residues-rich tracts occupy residues 77-86 (KSSKKSRKRA), 103-123 (KSKSKKKVDQKKKEKSKKKRT), 139-149 (KSKKKSKKTKK), 165-177 (VKKSKKNKEKSVK), 194-204 (KKSKKGLKKKA), and 219-229 (KKSKKKSKKVV). Positions 257 to 271 (ESSESEKSDEEEEEK) are enriched in acidic residues. Basic and acidic residues predominate over residues 321-336 (KDQKSESEASDVEEKV). The span at 347 to 357 (SESGSDSSEGS) shows a compositional bias: low complexity. The span at 362 to 376 (RKSKKKEKPEKKKKG) shows a compositional bias: basic residues. The span at 383-397 (KLQKETIDAERAEKE) shows a compositional bias: basic and acidic residues. One can recognise a Helicase ATP-binding domain in the interval 483–685 (DRLDTEGSGG…HCMVNFVKPG (203 aa)). ATP is bound at residue 496 to 503 (HCMGLGKT). Residues 636 to 639 (DEAH) carry the DEAH box motif. The segment at 809 to 891 (RVMREDAEEE…NSDDEDEEDG (83 aa)) is disordered. Residues 814 to 832 (DAEEEADFIDDGDGSESES) are compositionally biased toward acidic residues. Over residues 833–847 (EGSFKSGSESDSGKS) the composition is skewed to low complexity. A Helicase C-terminal domain is found at 951 to 1134 (LLVEIIKKCE…EAQIQRHYLG (184 aa)).

Belongs to the SNF2/RAD54 helicase family.

Its subcellular location is the nucleus. The catalysed reaction is ATP + H2O = ADP + phosphate + H(+). Functionally, required for embryonic development and gonadogenesis. Also, functions redundantly with the transcriptional repressor lin-35 to regulate somatic gonad development. The sequence is that of Transcriptional regulator ATRX homolog from Caenorhabditis elegans.